Consider the following 206-residue polypeptide: Guanylate kinase (206 aa).

A Guanylate kinase-like domain is found at 5-183 (FNLLILSGPS…SKEIILSIAK (179 aa)). Residue 12–19 (GPSGAGKS) participates in ATP binding.

Belongs to the guanylate kinase family.

It localises to the cytoplasm. It carries out the reaction GMP + ATP = GDP + ADP. Essential for recycling GMP and indirectly, cGMP. In Helicobacter pylori (strain J99 / ATCC 700824) (Campylobacter pylori J99), this protein is Guanylate kinase (gmk).